Consider the following 297-residue polypeptide: uncharacterized protein (297 aa).

7 WD repeats span residues K12–E51, G54–R93, G96–I135, D140–D177, F179–S217, K222–S261, and V265–N297.

The protein belongs to the WD repeat MORG1 family.

It localises to the cytoplasm. The protein resides in the nucleus. This is an uncharacterized protein from Schizosaccharomyces pombe (strain 972 / ATCC 24843) (Fission yeast).